The chain runs to 370 residues: Holliday junction branch migration complex subunit RuvB (370 aa).

Residues 1–53 (MAILSSQKQPLEPEPSKNPQSVQQPGLPPSTPEQGLLTAEVSPEERLSRTDDI) are disordered. Positions 13–214 (PEPSKNPQSV…FGLIQRLRFY (202 aa)) are large ATPase domain (RuvB-L). The segment covering 43-53 (PEERLSRTDDI) has biased composition (basic and acidic residues). ATP is bound by residues Ile53, Arg54, Gly95, Lys98, Thr99, Thr100, 161 to 163 (EDF), Arg204, Tyr214, and Arg251. Thr99 serves as a coordination point for Mg(2+). The interval 215 to 285 (EPEELSQIIL…IASEALQLFN (71 aa)) is small ATPAse domain (RuvB-S). The tract at residues 288–370 (PCGLDWTDRR…TPPDGQLSLL (83 aa)) is head domain (RuvB-H). Residues Arg343 and Arg348 each coordinate DNA.

Belongs to the RuvB family. Homohexamer. Forms an RuvA(8)-RuvB(12)-Holliday junction (HJ) complex. HJ DNA is sandwiched between 2 RuvA tetramers; dsDNA enters through RuvA and exits via RuvB. An RuvB hexamer assembles on each DNA strand where it exits the tetramer. Each RuvB hexamer is contacted by two RuvA subunits (via domain III) on 2 adjacent RuvB subunits; this complex drives branch migration. In the full resolvosome a probable DNA-RuvA(4)-RuvB(12)-RuvC(2) complex forms which resolves the HJ.

The protein localises to the cytoplasm. The catalysed reaction is ATP + H2O = ADP + phosphate + H(+). The RuvA-RuvB-RuvC complex processes Holliday junction (HJ) DNA during genetic recombination and DNA repair, while the RuvA-RuvB complex plays an important role in the rescue of blocked DNA replication forks via replication fork reversal (RFR). RuvA specifically binds to HJ cruciform DNA, conferring on it an open structure. The RuvB hexamer acts as an ATP-dependent pump, pulling dsDNA into and through the RuvAB complex. RuvB forms 2 homohexamers on either side of HJ DNA bound by 1 or 2 RuvA tetramers; 4 subunits per hexamer contact DNA at a time. Coordinated motions by a converter formed by DNA-disengaged RuvB subunits stimulates ATP hydrolysis and nucleotide exchange. Immobilization of the converter enables RuvB to convert the ATP-contained energy into a lever motion, pulling 2 nucleotides of DNA out of the RuvA tetramer per ATP hydrolyzed, thus driving DNA branch migration. The RuvB motors rotate together with the DNA substrate, which together with the progressing nucleotide cycle form the mechanistic basis for DNA recombination by continuous HJ branch migration. Branch migration allows RuvC to scan DNA until it finds its consensus sequence, where it cleaves and resolves cruciform DNA. The sequence is that of Holliday junction branch migration complex subunit RuvB from Cyanothece sp. (strain PCC 7425 / ATCC 29141).